A 170-amino-acid chain; its full sequence is 4-hydroxyphenylacetate 3-monooxygenase reductase component (170 aa).

It belongs to the non-flavoprotein flavin reductase family. HpaC subfamily. As to quaternary structure, homodimer. 4-HPA 3-monooxygenase consists of a reductase component HpaC and an oxygenase component HpaB.

The enzyme catalyses a reduced flavin + NAD(+) = an oxidized flavin + NADH + 2 H(+). The protein operates within aromatic compound metabolism; 4-hydroxyphenylacetate degradation; pyruvate and succinate semialdehyde from 4-hydroxyphenylacetate: step 1/7. Its function is as follows. Catalyzes the reduction of free flavins (FMN, FAD and riboflavin) by NADH. Subsequently, the reduced flavins diffuse to the large HpaB component or to other electron acceptors such as cytochrome c and Fe(3+) ion. The polypeptide is 4-hydroxyphenylacetate 3-monooxygenase reductase component (hpaC) (Salmonella dublin).